The following is a 417-amino-acid chain: Voltage-gated potassium channel Kch (417 aa).

Residues 1–21 (MSHWATFKQTATNLWVTLRHD) are Cytoplasmic-facing. Residues 22-41 (ILALAVFLNGLLIFKTIYGM) form a helical membrane-spanning segment. Residues 42-63 (SVNLLDIFHIKAFSELDLSLLA) are Periplasmic-facing. The helical transmembrane segment at 64–83 (NAPLFMLGVFLVLNSIGLLF) threads the bilayer. Topologically, residues 84–86 (RAK) are cytoplasmic. The chain crosses the membrane as a helical span at residues 87–104 (LAWAISIILLLIALIYTL). Residues 105 to 110 (HFYPWL) are Periplasmic-facing. A helical membrane pass occupies residues 111–127 (KFSIGFCIFTLVFLLIL). At 128 to 140 (RKDFSHSSAAAGT) the chain is on the cytoplasmic side. A helical membrane pass occupies residues 141–160 (IFAFISFTTLLFYSTYGALY). Topologically, residues 161-199 (LSEGFNPRIESLMTAFYFSIETMSTVGYGDIVPVSESAR) are periplasmic. The Selectivity filter motif lies at 185 to 190 (TVGYGD). Residues 200 to 220 (LFTISVIISGITVFATSMTSI) form a helical membrane-spanning segment. The Cytoplasmic portion of the chain corresponds to 221 to 417 (FGPLIRGGFN…KADSKESAQK (197 aa)). The RCK N-terminal domain maps to 243 to 363 (KDHFIVCGHS…IKMVHPDIIL (121 aa)).

The protein belongs to the potassium channel family. As to quaternary structure, dimer.

It is found in the cell inner membrane. K(+)-specific ion channel. May play a role in the defense against osmotic shock. The protein is Voltage-gated potassium channel Kch (kch) of Escherichia coli (strain K12).